A 381-amino-acid polypeptide reads, in one-letter code: Penicillin-binding protein 4 (381 aa).

Ser-60 serves as the catalytic Acyl-ester intermediate. Residues 271-291 (VAGCLDTWSFMATGWGHGWAL) traverse the membrane as a helical segment. 299-308 (GYGHDGASGG) is an NAD(+) binding site. A helical transmembrane segment spans residues 315–340 (VVPGSGVVAALLTNGGVATSFFTDLF).

This sequence belongs to the beta-lactamase family.

It localises to the cell membrane. In terms of biological role, involved in cell wall biosynthesis and may also act as a sensor of external penicillins. The polypeptide is Penicillin-binding protein 4 (pbp) (Amycolatopsis lactamdurans (Nocardia lactamdurans)).